A 154-amino-acid polypeptide reads, in one-letter code: PTS system fructose-specific EIIA component (154 aa).

Residues 8-152 form the PTS EIIA type-2 domain; it reads TITPLELISL…QTVQDVLAEV (145 aa). The Tele-phosphohistidine intermediate role is filled by H70. Position 70 is a phosphohistidine; by HPr (H70).

It localises to the cytoplasm. The phosphoenolpyruvate-dependent sugar phosphotransferase system (sugar PTS), a major carbohydrate active transport system, catalyzes the phosphorylation of incoming sugar substrates concomitantly with their translocation across the cell membrane. The enzyme II PtfABC PTS system is involved in fructose transport. This chain is PTS system fructose-specific EIIA component, found in Haloferax volcanii (strain ATCC 29605 / DSM 3757 / JCM 8879 / NBRC 14742 / NCIMB 2012 / VKM B-1768 / DS2) (Halobacterium volcanii).